Reading from the N-terminus, the 133-residue chain is Snaclec echicetin subunit alpha (133 aa).

3 disulfide bridges follow: C4/C15, C31/C127, and C102/C119. Residues 11-128 (YEGHCYQLFR…CEFKFPFVCK (118 aa)) enclose the C-type lectin domain.

This sequence belongs to the snaclec family. In terms of assembly, heterodimer of subunits alpha and beta; disulfide-linked. Forms an active complex with the pentameric immunoglobuline Mkappa (IgMkappa). In terms of tissue distribution, expressed by the venom gland.

The protein resides in the secreted. Functionally, echicetin itself inhibits aggregation of washed platelets induced by vWF, thrombin or alboaggregin-A. However, when complexed with the pentameric plasma immunoglobulin Mkappa (IgMkappa), echicetin binds specifically to GPIb and activates platelets. This is caused by P-selectin expression and activation of alpha-IIb/beta-3 as well as tyrosine phosphorylation of several signal transduction molecules, including p53/56(LYN), p64, p72(SYK), p70 to p90, and p120. In vivo, it induces thrombocytopenia when injected into mice, probably accounting of activation of platelets rather than inhibition. This chain is Snaclec echicetin subunit alpha, found in Echis carinatus sochureki (Saw-scaled viper).